A 476-amino-acid chain; its full sequence is 3-isopropylmalate dehydratase large subunit (476 aa).

The [4Fe-4S] cluster site is built by Cys353, Cys413, and Cys416.

This sequence belongs to the aconitase/IPM isomerase family. LeuC type 1 subfamily. Heterodimer of LeuC and LeuD. [4Fe-4S] cluster is required as a cofactor.

It catalyses the reaction (2R,3S)-3-isopropylmalate = (2S)-2-isopropylmalate. It functions in the pathway amino-acid biosynthesis; L-leucine biosynthesis; L-leucine from 3-methyl-2-oxobutanoate: step 2/4. Catalyzes the isomerization between 2-isopropylmalate and 3-isopropylmalate, via the formation of 2-isopropylmaleate. In Photobacterium profundum (strain SS9), this protein is 3-isopropylmalate dehydratase large subunit.